The chain runs to 112 residues: MAM and fibronectin type III domain-containing protein 2 (112 aa).

As to expression, component of the acid-insoluble and acid-soluble organic matrix of the aragonitic skeleton (at protein level).

It localises to the secreted. The protein is MAM and fibronectin type III domain-containing protein 2 of Acropora millepora (Staghorn coral).